We begin with the raw amino-acid sequence, 203 residues long: VPS4-associated protein 1 (203 aa).

The span at 99–109 shows a compositional bias: basic and acidic residues; it reads EKETNNSKDPD. Disordered stretches follow at residues 99 to 125 and 171 to 193; these read EKET…AKND and QVNR…EELL. The span at 110-120 shows a compositional bias: low complexity; sequence PTTTDSTDTSP. Residues 121 to 157 adopt a coiled-coil conformation; that stretch reads QAKNDAEILSETKKQYSKILDKVTELQRKNRKYELAK. Over residues 171-182 the composition is skewed to basic and acidic residues; sequence QVNRERYLKEQE.

Interacts with VPS4.

It is found in the cytoplasm. The protein localises to the endosome. Its function is as follows. VPS4-associated protein involved in trafficking to the vacuole. The protein is VPS4-associated protein 1 (VFA1) of Saccharomyces cerevisiae (strain ATCC 204508 / S288c) (Baker's yeast).